Consider the following 109-residue polypeptide: uncharacterized protein (109 aa).

Positions Met1 to Ala22 are cleaved as a signal peptide. Residues Ala39–Gln109 form a disordered region. Over residues Asn41 to Gln109 the composition is skewed to basic and acidic residues.

This is an uncharacterized protein from Shigella dysenteriae serotype 1 (strain Sd197).